The primary structure comprises 31 residues: Cyclotide psybry C (31 aa).

The segment at residues 1 to 31 (GFNPCGETCQIDQTCHAPGCTCSIANICVRN) is a cross-link (cyclopeptide (Gly-Asn)). Disulfide bonds link cysteine 5–cysteine 20, cysteine 9–cysteine 22, and cysteine 15–cysteine 28.

Post-translationally, this is a cyclic peptide.

Its function is as follows. Probably participates in a plant defense mechanism. This is Cyclotide psybry C from Psychotria brachyceras.